The chain runs to 298 residues: Oxygen-dependent coproporphyrinogen-III oxidase (298 aa).

Ser90 is a binding site for substrate. Residues His94 and His104 each contribute to the a divalent metal cation site. His104 acts as the Proton donor in catalysis. 106 to 108 lines the substrate pocket; that stretch reads NVR. Residues His143 and His173 each contribute to the a divalent metal cation site. The tract at residues 238 to 273 is important for dimerization; sequence YVEFNLVWDRGTLFGLQSGGRTESILMSLPPIVKWR. 256-258 serves as a coordination point for substrate; the sequence is GGR.

The protein belongs to the aerobic coproporphyrinogen-III oxidase family. As to quaternary structure, homodimer. A divalent metal cation is required as a cofactor.

It localises to the cytoplasm. It catalyses the reaction coproporphyrinogen III + O2 + 2 H(+) = protoporphyrinogen IX + 2 CO2 + 2 H2O. It functions in the pathway porphyrin-containing compound metabolism; protoporphyrin-IX biosynthesis; protoporphyrinogen-IX from coproporphyrinogen-III (O2 route): step 1/1. Involved in the heme biosynthesis. Catalyzes the aerobic oxidative decarboxylation of propionate groups of rings A and B of coproporphyrinogen-III to yield the vinyl groups in protoporphyrinogen-IX. This chain is Oxygen-dependent coproporphyrinogen-III oxidase, found in Dechloromonas aromatica (strain RCB).